Here is a 697-residue protein sequence, read N- to C-terminus: Ribosomal RNA large subunit methyltransferase K/L (697 aa).

One can recognise a THUMP domain in the interval 43 to 154; sequence ILYNSLMWSR…QNLVHIMLDL (112 aa).

The protein belongs to the methyltransferase superfamily. RlmKL family.

It is found in the cytoplasm. The enzyme catalyses guanosine(2445) in 23S rRNA + S-adenosyl-L-methionine = N(2)-methylguanosine(2445) in 23S rRNA + S-adenosyl-L-homocysteine + H(+). It catalyses the reaction guanosine(2069) in 23S rRNA + S-adenosyl-L-methionine = N(2)-methylguanosine(2069) in 23S rRNA + S-adenosyl-L-homocysteine + H(+). Functionally, specifically methylates the guanine in position 2445 (m2G2445) and the guanine in position 2069 (m7G2069) of 23S rRNA. This chain is Ribosomal RNA large subunit methyltransferase K/L, found in Buchnera aphidicola subsp. Schizaphis graminum (strain Sg).